The following is a 449-amino-acid chain: Plasmepsin IV (449 aa).

Residues 1 to 37 (MALTVKEEEFSNTLIKNASAFDRLKLGNLKNLKIQKK) are Cytoplasmic-facing. Residues 1-121 (MALTVKEEEF…SGYAQKGYLG (121 aa)) constitute a propeptide that is removed on maturation. The chain crosses the membrane as a helical; Signal-anchor for type II membrane protein span at residues 38 to 58 (LQFLYLILFVLITGVFFFFLI). Residues 59–449 (GNFYSHRKLY…SVGFAVAKNL (391 aa)) are Lumenal-facing. One can recognise a Peptidase A1 domain in the interval 137–444 (FYGEGQIGTN…DYEKESVGFA (308 aa)). Asp155 is an active-site residue. Residues Cys168 and Cys173 are joined by a disulfide bond. Residue Asp335 is part of the active site. Cys370 and Cys406 are oxidised to a cystine.

This sequence belongs to the peptidase A1 family. Component of the hemozoin formation complex (HFC) composed of falcipains FP2A and/or FP2B, plasmepsins PMII, PMIII/HAP and PMIV, heme detoxifying protein HDP and falcilysin FLN. The HFC complex is involved in hemoglobin degradation and detoxification of heme in the food vacuole during the asexual blood stage. In terms of processing, proteolytically cleaved into the soluble active mature form by cysteine proteases in the digestive vacuole of trophozoites. Proteolysis requires an acidic environment. Autoprocessing or transprocessing by other plasmepsins such as PMII may serve as an alternate activation system.

It is found in the membrane. It localises to the vacuole lumen. The catalysed reaction is Hydrolysis of the bonds linking certain hydrophobic residues in hemoglobin or globin. Also cleaves small molecules substrates such as Ala-Leu-Glu-Arg-Thr-Phe-|-Phe(NO2)-Ser-Phe-Pro-Thr.. Its activity is regulated as follows. Inhibited by KNI derived compounds KNI-10333 and to a lesser extent KNI-10743. During the asexual blood stage, catalyzes the cleavage of denatured host hemoglobin (Hb). Digestion of host Hb is an essential step which provides the parasite with amino acids for protein synthesis, and regulates osmolarity. In Plasmodium falciparum (isolate 3D7), this protein is Plasmepsin IV.